Consider the following 252-residue polypeptide: 5-oxoprolinase subunit A (252 aa).

It belongs to the LamB/PxpA family. As to quaternary structure, forms a complex composed of PxpA, PxpB and PxpC.

The enzyme catalyses 5-oxo-L-proline + ATP + 2 H2O = L-glutamate + ADP + phosphate + H(+). In terms of biological role, catalyzes the cleavage of 5-oxoproline to form L-glutamate coupled to the hydrolysis of ATP to ADP and inorganic phosphate. The protein is 5-oxoprolinase subunit A of Bordetella pertussis (strain Tohama I / ATCC BAA-589 / NCTC 13251).